Here is a 239-residue protein sequence, read N- to C-terminus: 2,3,4,5-tetrahydropyridine-2,6-dicarboxylate N-acetyltransferase (239 aa).

This sequence belongs to the transferase hexapeptide repeat family. DapH subfamily.

The catalysed reaction is (S)-2,3,4,5-tetrahydrodipicolinate + acetyl-CoA + H2O = L-2-acetamido-6-oxoheptanedioate + CoA. It functions in the pathway amino-acid biosynthesis; L-lysine biosynthesis via DAP pathway; LL-2,6-diaminopimelate from (S)-tetrahydrodipicolinate (acetylase route): step 1/3. In terms of biological role, catalyzes the transfer of an acetyl group from acetyl-CoA to tetrahydrodipicolinate. The protein is 2,3,4,5-tetrahydropyridine-2,6-dicarboxylate N-acetyltransferase of Staphylococcus aureus (strain JH9).